A 666-amino-acid chain; its full sequence is DNA mismatch repair protein MutL (666 aa).

This sequence belongs to the DNA mismatch repair MutL/HexB family.

Functionally, this protein is involved in the repair of mismatches in DNA. It is required for dam-dependent methyl-directed DNA mismatch repair. May act as a 'molecular matchmaker', a protein that promotes the formation of a stable complex between two or more DNA-binding proteins in an ATP-dependent manner without itself being part of a final effector complex. This chain is DNA mismatch repair protein MutL, found in Clostridium botulinum (strain Langeland / NCTC 10281 / Type F).